Consider the following 240-residue polypeptide: Allene oxide cyclase, chloroplastic (240 aa).

The transit peptide at 1–49 (MAAAAPSRVSVRAAAPGQTGGFAKIRPQVVVAAAARSAGVSGRRARSVR) directs the protein to the chloroplast.

It belongs to the allene oxide cyclase family.

It localises to the plastid. It is found in the chloroplast. The enzyme catalyses (9Z,13S,15Z)-12,13-epoxyoctadeca-9,11,15-trienoate = (9S,13S,15Z)-12-oxophyto-10,15-dienoate. It participates in lipid metabolism; polyunsaturated fatty acid biosynthesis. Functionally, involved in the production of 12-oxo-phytodienoic acid (OPDA), a precursor of jasmonic acid (JA). Required for the production of JA in response to wounding. Necessary for flower and coleoptile development regulation by light, including blue (BL), red (RL) and far red (FR) lights. Involved in the auxin-mediated signaling pathway leading to growth stimulation. Essential for photodestruction of phyA upon activation by RL and FR. Implicated in responses to salt stress (NaCl). Confers resistance to incompatible strains of the blast fungus Magnaporthe grisea, jasmonic acid (JA) thus playing a significant role in the resistance to fungal infection. Implicated in riboflavin-induced resistance to the sheath blight Rhizoctonia solani. Required for Pseudomonas fluorescens-mediated JA-dependent induced systemic resistance (ISR). Confers some resistance, independently of the JA pathway but probably via OPDA accumulation, to brown planthopper (BPH, Nilaparvata lugens), a destructive, monophagous, piercing-sucking insect, mainly by reducing its feeding activity and survival rate. Triggers resistance to the chewing insect striped stem borer (SSB) Chilo suppressalis, to the root hemiparasite witchweed Striga hermonthica, and to the root feeder insect rice water weevil Lissorhoptrus oryzophilus, in a JA-dependent manner, by attenuating both the growth mass and growth rate of caterpillars. The chain is Allene oxide cyclase, chloroplastic from Oryza sativa subsp. indica (Rice).